The chain runs to 268 residues: Tryptophan synthase alpha chain (268 aa).

Residues Glu47 and Asp58 each act as proton acceptor in the active site.

It belongs to the TrpA family. As to quaternary structure, tetramer of two alpha and two beta chains.

It localises to the plastid. The protein resides in the chloroplast. The catalysed reaction is (1S,2R)-1-C-(indol-3-yl)glycerol 3-phosphate + L-serine = D-glyceraldehyde 3-phosphate + L-tryptophan + H2O. It functions in the pathway amino-acid biosynthesis; L-tryptophan biosynthesis; L-tryptophan from chorismate: step 5/5. Its function is as follows. The alpha subunit is responsible for the aldol cleavage of indoleglycerol phosphate to indole and glyceraldehyde 3-phosphate. In Gracilaria tenuistipitata var. liui (Red alga), this protein is Tryptophan synthase alpha chain.